We begin with the raw amino-acid sequence, 576 residues long: Probable proline--tRNA ligase, mitochondrial (576 aa).

This sequence belongs to the class-II aminoacyl-tRNA synthetase family.

The protein localises to the mitochondrion. The enzyme catalyses tRNA(Pro) + L-proline + ATP = L-prolyl-tRNA(Pro) + AMP + diphosphate. This Saccharomyces cerevisiae (strain ATCC 204508 / S288c) (Baker's yeast) protein is Probable proline--tRNA ligase, mitochondrial (AIM10).